The chain runs to 330 residues: Tetraacyldisaccharide 4'-kinase (330 aa).

58-65 (TVGGSGKT) provides a ligand contact to ATP.

This sequence belongs to the LpxK family.

It catalyses the reaction a lipid A disaccharide + ATP = a lipid IVA + ADP + H(+). Its pathway is glycolipid biosynthesis; lipid IV(A) biosynthesis; lipid IV(A) from (3R)-3-hydroxytetradecanoyl-[acyl-carrier-protein] and UDP-N-acetyl-alpha-D-glucosamine: step 6/6. Transfers the gamma-phosphate of ATP to the 4'-position of a tetraacyldisaccharide 1-phosphate intermediate (termed DS-1-P) to form tetraacyldisaccharide 1,4'-bis-phosphate (lipid IVA). This chain is Tetraacyldisaccharide 4'-kinase, found in Shewanella halifaxensis (strain HAW-EB4).